Reading from the N-terminus, the 230-residue chain is Large ribosomal subunit protein uL1 (230 aa).

Belongs to the universal ribosomal protein uL1 family. In terms of assembly, part of the 50S ribosomal subunit.

Binds directly to 23S rRNA. The L1 stalk is quite mobile in the ribosome, and is involved in E site tRNA release. In terms of biological role, protein L1 is also a translational repressor protein, it controls the translation of the L11 operon by binding to its mRNA. The polypeptide is Large ribosomal subunit protein uL1 (Desulforapulum autotrophicum (strain ATCC 43914 / DSM 3382 / VKM B-1955 / HRM2) (Desulfobacterium autotrophicum)).